Reading from the N-terminus, the 433-residue chain is Mitochondrial inner membrane protein OXA1L (433 aa).

The Mitochondrial intermembrane portion of the chain corresponds to 1 to 108 (MARNLVCGRW…QCATEPSFTE (108 aa)). Residues 109–129 (LGLGSYTPVGLIQNLLEYIHV) form a helical membrane-spanning segment. The Mitochondrial matrix segment spans residues 130–134 (DLGLP). A helical membrane pass occupies residues 135 to 155 (WWGAIATCTVLARCLVFPLIV). Over 156–207 (KGQREAAKIHNHMPEMQKFSARIREAKLAGDQAEFYKATIEMTRYQKKHDIK) the chain is Mitochondrial intermembrane. Residues 208 to 228 (LLRPLILPLTQAPVFISFFIA) traverse the membrane as a helical segment. Residues 229 to 255 (LREMANLPVPSLQTGGLWWFQDLTVSD) lie on the Mitochondrial matrix side of the membrane. The helical transmembrane segment at 256 to 276 (PIYVLPLVVTATMWCVLELGA) threads the bilayer. The Mitochondrial intermembrane portion of the chain corresponds to 277-293 (ETGVQSNDLQFMRNIIR). Residues 294-314 (VMPLVVLPVTIHFPSAVFMYW) traverse the membrane as a helical segment. Over 315 to 433 (LSSNVFSLCQ…AKKPWQDTLG (119 aa)) the chain is Mitochondrial matrix. S359 bears the Phosphoserine mark. Residues T395 and T397 each carry the phosphothreonine modification. The tract at residues 397–433 (THNPLLQHDPSHPPKAPNSNNSSIKANAKKPWQDTLG) is disordered. A compositionally biased stretch (low complexity) spans 413–426 (PNSNNSSIKANAKK).

Belongs to the OXA1/ALB3/YidC family. As to quaternary structure, monomer; predominantly monomeric at low salt concentrations. Homooligomer; predominantly homooligomeric at high salt concentrations. Associates with the mitochondrial ribosome. Associates preferentially as a dimer with the large ribosomal subunit 39S of the mitochondrial ribosome. Interacts with OXA1L; promoting cotranslational quality control in mitochondria.

The protein resides in the mitochondrion inner membrane. Functionally, mitochondrial membrane insertase that mediates the cotranslational insertion of integral membrane proteins into the mitochondrial inner membrane. Essential for the activity and assembly of cytochrome oxidase. Required for the correct biogenesis of ATP synthase and complex I in mitochondria. This is Mitochondrial inner membrane protein OXA1L (Oxa1l) from Mus musculus (Mouse).